The chain runs to 631 residues: Squalene--hopene cyclase (631 aa).

3 PFTB repeats span residues Leu-15–Val-56, Met-61–Gly-102, and Glu-241–Ala-282. Asp-376 acts as the Proton donor in catalysis. 4 PFTB repeats span residues Met-400 to Thr-441, Ile-468 to Gly-508, Ile-516 to Ala-557, and Ala-574 to Gly-622.

The protein belongs to the terpene cyclase/mutase family. In terms of assembly, homodimer.

It is found in the cell membrane. It catalyses the reaction squalene = hop-22(29)-ene. The enzyme catalyses squalene + H2O = hopan-22-ol. It participates in secondary metabolite biosynthesis; hopanoid biosynthesis. In terms of biological role, catalyzes the cyclization of squalene to two pentacyclic triterpenes, hop-22(29)-ene and hopan-22-ol (diplopterol); hopene and hopanol are formed at a constant ratio of 5:1. Is a key enzyme of hopanoid biosynthesis; hopanoids are components of the bacterial cytoplasmic membranes that play a vital role in stabilizing the membranes. The chain is Squalene--hopene cyclase (shc) from Alicyclobacillus acidocaldarius subsp. acidocaldarius (strain ATCC 27009 / DSM 446 / BCRC 14685 / JCM 5260 / KCTC 1825 / NBRC 15652 / NCIMB 11725 / NRRL B-14509 / 104-IA) (Bacillus acidocaldarius).